The following is a 493-amino-acid chain: Amino acid permease 2 (493 aa).

The Cytoplasmic portion of the chain corresponds to M1–T49. The next 2 membrane-spanning stretches (helical) occupy residues V50 to A70 and W71 to V91. Residues T92–Y138 lie on the Cytoplasmic side of the membrane. Residues L139–I159 traverse the membrane as a helical segment. Residues K160–H175 are Extracellular-facing. Residues M176 to P196 form a helical membrane-spanning segment. Residues D197 to Q200 are Cytoplasmic-facing. A helical membrane pass occupies residues I201 to A221. Topologically, residues L222 to R253 are extracellular. A helical membrane pass occupies residues T254–I274. Over Q275–K293 the chain is Cytoplasmic. The chain crosses the membrane as a helical span at residues I294–F314. Residues G315–A340 are Extracellular-facing. Residues A341–I361 traverse the membrane as a helical segment. Topologically, residues E362 to R396 are cytoplasmic. The helical transmembrane segment at M397–F417 threads the bilayer. Over N418 to D419 the chain is Extracellular. A helical transmembrane segment spans residues V420 to M440. The Cytoplasmic segment spans residues Y441 to Q458. The chain crosses the membrane as a helical span at residues M459–V479. Topologically, residues M480 to Y493 are extracellular.

This sequence belongs to the amino acid/polyamine transporter 2 family. Amino acid/auxin permease (AAAP) (TC 2.A.18.2) subfamily. Highly expressed in developing pods. Found in the vascular strands of siliques, cotyledons, leaves and roots, in the inner phloem of stems, and in the funiculi. Lower levels of expression in flowers. Not expressed in seeds.

It localises to the cell membrane. With respect to regulation, inhibited by diethylpyrocarbonate (DEPC). Amino acid-proton symporter. Stereospecific transporter with a broad specificity for histidine, arginine, glutamate and neutral amino acids, favoring small amino acids such as alanine, asparagine and glutamine. Also accepts large aromatic residues such as phenlalanine or tyrosine. Has a much higher affinity for basic amino acids as compared with AAP1. May function in xylem-to-phloem transfer and in uptake of amino acids assimilated in the green silique tissue. The polypeptide is Amino acid permease 2 (AAP2) (Arabidopsis thaliana (Mouse-ear cress)).